A 324-amino-acid chain; its full sequence is MAELEFEKPVVELRNKIRELKDYTKNSQMDFSEEIRILEEKLENLEEDIYGNLKVWDRVQIARHAERPTTLDYIEHLFTDFFECHGDRLFGDDAAIVGGIAKYKGMPVTVIGHQRGKDTKENIRRNFGMPHPEGYRKALRLMKQAEKFNRPIICFIDTKGAYPGKAAEERGQSEAIARNLFEMAGLTVPVICIVIGEGGSGGALGLGVGDYIHMLENSTYSVITPEGAAAILWKDAGKAKEAAEAMKITAADLKELGVIDEIIPEARGGAHRNVLKQSENIDLMIRKTFEQLNGISKDELIEKRYEKYMKIGQVSFSNASIWIK.

The CoA carboxyltransferase C-terminal domain maps to 37–291 (ILEEKLENLE…DLMIRKTFEQ (255 aa)).

Belongs to the AccA family. As to quaternary structure, acetyl-CoA carboxylase is a heterohexamer composed of biotin carboxyl carrier protein (AccB), biotin carboxylase (AccC) and two subunits each of ACCase subunit alpha (AccA) and ACCase subunit beta (AccD).

The protein resides in the cytoplasm. The enzyme catalyses N(6)-carboxybiotinyl-L-lysyl-[protein] + acetyl-CoA = N(6)-biotinyl-L-lysyl-[protein] + malonyl-CoA. The protein operates within lipid metabolism; malonyl-CoA biosynthesis; malonyl-CoA from acetyl-CoA: step 1/1. Functionally, component of the acetyl coenzyme A carboxylase (ACC) complex. First, biotin carboxylase catalyzes the carboxylation of biotin on its carrier protein (BCCP) and then the CO(2) group is transferred by the carboxyltransferase to acetyl-CoA to form malonyl-CoA. The polypeptide is Acetyl-coenzyme A carboxylase carboxyl transferase subunit alpha (Bacillus cereus (strain B4264)).